The following is a 338-amino-acid chain: Anthranilate phosphoribosyltransferase (338 aa).

5-phospho-alpha-D-ribose 1-diphosphate-binding positions include Gly-81, 84–85 (GD), Ser-89, 91–94 (NVST), 109–117 (KHGNRALSS), and Ala-121. Gly-81 provides a ligand contact to anthranilate. Ser-93 is a binding site for Mg(2+). Asn-112 contacts anthranilate. An anthranilate-binding site is contributed by Arg-167. Mg(2+) contacts are provided by Asp-226 and Glu-227.

This sequence belongs to the anthranilate phosphoribosyltransferase family. As to quaternary structure, homodimer. It depends on Mg(2+) as a cofactor.

The enzyme catalyses N-(5-phospho-beta-D-ribosyl)anthranilate + diphosphate = 5-phospho-alpha-D-ribose 1-diphosphate + anthranilate. It participates in amino-acid biosynthesis; L-tryptophan biosynthesis; L-tryptophan from chorismate: step 2/5. Functionally, catalyzes the transfer of the phosphoribosyl group of 5-phosphorylribose-1-pyrophosphate (PRPP) to anthranilate to yield N-(5'-phosphoribosyl)-anthranilate (PRA). The protein is Anthranilate phosphoribosyltransferase of Rhodopseudomonas palustris (strain HaA2).